Here is a 637-residue protein sequence, read N- to C-terminus: Phospholipase B (637 aa).

Residues 1 to 19 form the signal peptide; that stretch reads MSIITTAFALSLLATTAFA. The region spanning 46–572 is the PLA2c domain; sequence DCPSNVTWIR…DTWCWAGDDN (527 aa). N-linked (GlcNAc...) asparagine glycans are attached at residues asparagine 50, asparagine 56, asparagine 122, asparagine 231, asparagine 246, asparagine 272, asparagine 314, asparagine 343, asparagine 387, asparagine 433, asparagine 481, asparagine 501, asparagine 528, asparagine 553, asparagine 572, asparagine 594, and asparagine 606.

This sequence belongs to the lysophospholipase family. Post-translationally, N-glycosylated.

The protein localises to the secreted. It catalyses the reaction a 1-acyl-sn-glycero-3-phosphocholine + H2O = sn-glycerol 3-phosphocholine + a fatty acid + H(+). Exhibits phospholipase B (PLB), lysophospholipase (LPL) and lysophospholipase/transacylase (LPTA) activities. This Cryptococcus neoformans var. neoformans serotype D (strain B-3501A) (Filobasidiella neoformans) protein is Phospholipase B (PLB1).